Consider the following 447-residue polypeptide: Serine/threonine-protein phosphatase 2A 55 kDa regulatory subunit B alpha isoform (447 aa).

Ala2 is subject to N-acetylalanine. WD repeat units lie at residues 11–80 (QWCF…FQSH), 94–174 (EKIN…IFAN), 175–218 (AHTY…VDIK), 227–270 (EVIT…KLFE), 288–325 (ISDV…TYQV), 347–381 (ECCW…TLEA), and 414–446 (DFNK…QDKV).

The protein belongs to the phosphatase 2A regulatory subunit B family. PP2A consists of a common heterodimeric core enzyme, composed of a 36 kDa catalytic subunit (subunit C) and a 65 kDa constant regulatory subunit (PR65 or subunit A), that associates with a variety of regulatory subunits. Proteins that associate with the core dimer include three families of regulatory subunits B (the R2/B/PR55/B55, R3/B''/PR72/PR130/PR59 and R5/B'/B56 families), the 48 kDa variable regulatory subunit, viral proteins, and cell signaling molecules. Interacts with the PP2A C catalytic subunit PPP2CA. Interacts with the PP2A A subunit PPP2R1A. Interacts with TP53. Interacts with IER5. Interacts with MFHAS1; the interaction is direct. Interacts with PABIR1/FAM122A (via its N-terminus); the interaction is direct and inhibits PP2A activity. Interacts with ARPP19; the interaction is direct and inhibits PP2A activity. Interacts with CRTC3. Expressed in all tissues examined.

Functionally, substrate-recognition subunit of protein phosphatase 2A (PP2A) that plays a key role in cell cycle by controlling mitosis entry and exit. Involved in chromosome clustering during late mitosis by mediating dephosphorylation of MKI67. Essential for serine/threonine-protein phosphatase 2A-mediated dephosphorylation of WEE1, preventing its ubiquitin-mediated proteolysis, increasing WEE1 protein levels, and promoting the G2/M checkpoint. This chain is Serine/threonine-protein phosphatase 2A 55 kDa regulatory subunit B alpha isoform (PPP2R2A), found in Homo sapiens (Human).